The primary structure comprises 166 residues: Interferon gamma (166 aa).

Residues 1–23 (MNYTSYILAFQLCVILGSSGCYC) form the signal peptide. Gln24 carries the pyrrolidone carboxylic acid modification. Asn39 and Asn106 each carry an N-linked (GlcNAc...) asparagine glycan.

This sequence belongs to the type II (or gamma) interferon family. In terms of assembly, homodimer. Interacts with IFNGR1 (via extracellular domain); this interaction promotes IFNGR1 dimerization. Released primarily from activated T lymphocytes.

The protein resides in the secreted. In terms of biological role, type II interferon produced by immune cells such as T-cells and NK cells that plays crucial roles in antimicrobial, antiviral, and antitumor responses by activating effector immune cells and enhancing antigen presentation. Primarily signals through the JAK-STAT pathway after interaction with its receptor IFNGR1 to affect gene regulation. Upon IFNG binding, IFNGR1 intracellular domain opens out to allow association of downstream signaling components JAK2, JAK1 and STAT1, leading to STAT1 activation, nuclear translocation and transcription of IFNG-regulated genes. Many of the induced genes are transcription factors such as IRF1 that are able to further drive regulation of a next wave of transcription. Plays a role in class I antigen presentation pathway by inducing a replacement of catalytic proteasome subunits with immunoproteasome subunits. In turn, increases the quantity, quality, and repertoire of peptides for class I MHC loading. Increases the efficiency of peptide generation also by inducing the expression of activator PA28 that associates with the proteasome and alters its proteolytic cleavage preference. Up-regulates as well MHC II complexes on the cell surface by promoting expression of several key molecules such as cathepsins B/CTSB, H/CTSH, and L/CTSL. Participates in the regulation of hematopoietic stem cells during development and under homeostatic conditions by affecting their development, quiescence, and differentiation. In Camelus bactrianus (Bactrian camel), this protein is Interferon gamma (IFNG).